A 185-amino-acid chain; its full sequence is Ribosome-recycling factor (185 aa).

This sequence belongs to the RRF family.

The protein resides in the cytoplasm. In terms of biological role, responsible for the release of ribosomes from messenger RNA at the termination of protein biosynthesis. May increase the efficiency of translation by recycling ribosomes from one round of translation to another. This is Ribosome-recycling factor from Glaesserella parasuis serovar 5 (strain SH0165) (Haemophilus parasuis).